We begin with the raw amino-acid sequence, 286 residues long: Probable ketoamine kinase EAE_16955 (286 aa).

92–94 is a binding site for ATP; that stretch reads EYL. Residue Asp-194 is the Proton acceptor of the active site.

It belongs to the fructosamine kinase family.

Functionally, ketoamine kinase that phosphorylates ketoamines on the third carbon of the sugar moiety to generate ketoamine 3-phosphate. The polypeptide is Probable ketoamine kinase EAE_16955 (Klebsiella aerogenes (strain ATCC 13048 / DSM 30053 / CCUG 1429 / JCM 1235 / KCTC 2190 / NBRC 13534 / NCIMB 10102 / NCTC 10006 / CDC 819-56) (Enterobacter aerogenes)).